Here is a 91-residue protein sequence, read N- to C-terminus: Acylphosphatase (91 aa).

The Acylphosphatase-like domain occupies 5–91; the sequence is WKKWNVRGVV…QEYKDFHVEF (87 aa). Catalysis depends on residues arginine 20 and asparagine 38.

It belongs to the acylphosphatase family.

The enzyme catalyses an acyl phosphate + H2O = a carboxylate + phosphate + H(+). The chain is Acylphosphatase (acyP) from Fervidobacterium nodosum (strain ATCC 35602 / DSM 5306 / Rt17-B1).